A 1744-amino-acid chain; its full sequence is Retrotransposon-like protein 1 (1744 aa).

3 disordered regions span residues 1-416, 823-859, and 1287-1439; these read MIEP…SPEE, READ…DQSG, and SSET…EVPS. Over residues 19–30 the composition is skewed to low complexity; sequence SSKQMESSEGSS. The segment covering 31-40 has biased composition (polar residues); the sequence is NTVEETPGSS. The span at 41–80 shows a compositional bias: low complexity; it reads GAQAGAQAGAQAEAQAETQVEAQAEAQAEAQVEAQVEAQA. A compositionally biased stretch (polar residues) spans 269 to 318; that stretch reads DGSNQESSDGSNHELSNGSNHESSFGSNPESSDVSNLESSGGSNQESSDG. A compositionally biased stretch (low complexity) spans 332–361; sequence SDNSNQELSDNSNQESSDSSNQSSDISNQE. Composition is skewed to acidic residues over residues 385 to 407, 837 to 846, and 1291 to 1437; these read SDQD…GEEE, GSDDLSESEP, and EDKE…DEEV. 2 consecutive transmembrane segments (helical) span residues 1473–1493 and 1520–1540; these read FFRG…LVML and LILD…AQLL.

As to expression, expressed in placenta and in various tissues in late-fetal stage.

The protein localises to the membrane. Its function is as follows. Plays an essential role in capillaries endothelial cells for the maintenance of feto-maternal interface and for development of the placenta. The polypeptide is Retrotransposon-like protein 1 (Rtl1) (Mus musculus (Mouse)).